The chain runs to 431 residues: tRNA(Ile)-lysidine synthase (431 aa).

19–24 (STGIDS) provides a ligand contact to ATP.

Belongs to the tRNA(Ile)-lysidine synthase family.

Its subcellular location is the cytoplasm. It catalyses the reaction cytidine(34) in tRNA(Ile2) + L-lysine + ATP = lysidine(34) in tRNA(Ile2) + AMP + diphosphate + H(+). In terms of biological role, ligates lysine onto the cytidine present at position 34 of the AUA codon-specific tRNA(Ile) that contains the anticodon CAU, in an ATP-dependent manner. Cytidine is converted to lysidine, thus changing the amino acid specificity of the tRNA from methionine to isoleucine. The protein is tRNA(Ile)-lysidine synthase of Staphylococcus aureus (strain MW2).